We begin with the raw amino-acid sequence, 399 residues long: Rhodopsin, G0-coupled (399 aa).

The Extracellular portion of the chain corresponds to 1–17 (MPFPLNRTDTALVISPS). N6 carries an N-linked (GlcNAc...) asparagine glycan. Residues 18 to 43 (EFRIIGIFISICCIIGVLGNLLIIIV) form a helical membrane-spanning segment. Residues 44 to 55 (FAKRRSVRRPIN) are Cytoplasmic-facing. A helical transmembrane segment spans residues 56–81 (FFVLNLAVSDLIVALLGYPMTAASAF). Topologically, residues 82 to 95 (SNRWIFDNIGCKIY) are extracellular. A disulfide bridge links C92 with C169. A helical transmembrane segment spans residues 96–115 (AFLCFNSGVISIMTHAALSF). At 116 to 134 (CRYIIICQYGYRKKITQTT) the chain is on the cytoplasmic side. A helical transmembrane segment spans residues 135–158 (VLRTLFSIWSFAMFWTLSPLFGWS). The Extracellular portion of the chain corresponds to 159-182 (SYVIEVVPVSCSVNWYGHGLGDVS). Residues 183–210 (YTISVIVAVYVFPLSIIVFSYGMILQEK) form a helical membrane-spanning segment. Topologically, residues 211 to 240 (VCKDSRKNGIRAQQRYTPRFIQDIEQRVTF) are cytoplasmic. The helical transmembrane segment at 241-263 (ISFLMMAAFMVAWTPYAIMSALA) threads the bilayer. The Extracellular portion of the chain corresponds to 264-271 (IGSFNVEN). Residues 272–295 (SFAALPTLFAKASCAYNPFIYAFT) form a helical membrane-spanning segment. K282 carries the N6-(retinylidene)lysine modification. The Cytoplasmic portion of the chain corresponds to 296–399 (NANFRDTVVE…NTFTADFSVI (104 aa)).

It belongs to the G-protein coupled receptor 1 family. Opsin subfamily. In terms of processing, phosphorylated on some or all of the serine and threonine residues present in the C-terminal region. As to expression, retina. Expressed in the hyperpolarizing cell layer of the photoreceptor cells with its photoreceptive region adjacent to the lens.

It localises to the membrane. Visual pigments are the light-absorbing molecules that mediate vision. They consist of an apoprotein, opsin, covalently linked to cis-retinal. This is Rhodopsin, G0-coupled (SCOP2) from Mizuhopecten yessoensis (Japanese scallop).